Reading from the N-terminus, the 183-residue chain is Nucleoplasmin-like protein NO29 (183 aa).

The segment covering 126–166 has biased composition (acidic residues); sequence SDDEDLSGSEEEMEDEEEEEDDDDDDDDDDDDDDDDDEEEI. Positions 126-183 are disordered; sequence SDDEDLSGSEEEMEDEEEEEDDDDDDDDDDDDDDDDDEEEITPIKPAKKPLKTLSRTF.

The protein belongs to the nucleoplasmin family.

The protein localises to the nucleus. It is found in the nucleolus. In Xenopus laevis (African clawed frog), this protein is Nucleoplasmin-like protein NO29.